Reading from the N-terminus, the 263-residue chain is Proteasome subunit alpha type-1 (263 aa).

Met-1 carries the post-translational modification N-acetylmethionine. Position 110 is a phosphoserine; alternate (Ser-110). Residue Ser-110 is glycosylated (O-linked (GlcNAc) serine; alternate). A Glycyl lysine isopeptide (Lys-Gly) (interchain with G-Cter in ubiquitin) cross-link involves residue Lys-115. A Phosphoserine modification is found at Ser-177. Residue Lys-208 forms a Glycyl lysine isopeptide (Lys-Gly) (interchain with G-Cter in ubiquitin) linkage. The disordered stretch occupies residues 232-263 (FLDGLEERPQRKAQPSQAADEPAEKADEPMEH). Residues 253–263 (PAEKADEPMEH) show a composition bias toward basic and acidic residues.

This sequence belongs to the peptidase T1A family. The 26S proteasome consists of a 20S proteasome core and two 19S regulatory subunits. The 20S proteasome core is a barrel-shaped complex made of 28 subunits that are arranged in four stacked rings. The two outer rings are each formed by seven alpha subunits, and the two inner rings are formed by seven beta subunits. The proteolytic activity is exerted by three beta-subunits PSMB5, PSMB6 and PSMB7. Interacts with NOTCH3. Interacts with ZFAND1. Post-translationally, proteolytically cleaved from a C-terminal extension in the course of the conversion of the proteasome from its latent form into its active form. As to expression, ubiquitous.

The protein localises to the cytoplasm. Its subcellular location is the nucleus. Component of the 20S core proteasome complex involved in the proteolytic degradation of most intracellular proteins. This complex plays numerous essential roles within the cell by associating with different regulatory particles. Associated with two 19S regulatory particles, forms the 26S proteasome and thus participates in the ATP-dependent degradation of ubiquitinated proteins. The 26S proteasome plays a key role in the maintenance of protein homeostasis by removing misfolded or damaged proteins that could impair cellular functions, and by removing proteins whose functions are no longer required. Associated with the PA200 or PA28, the 20S proteasome mediates ubiquitin-independent protein degradation. This type of proteolysis is required in several pathways including spermatogenesis (20S-PA200 complex) or generation of a subset of MHC class I-presented antigenic peptides (20S-PA28 complex). The polypeptide is Proteasome subunit alpha type-1 (Psma1) (Rattus norvegicus (Rat)).